A 500-amino-acid chain; its full sequence is Probable 26S proteasome non-ATPase regulatory subunit 3 (500 aa).

Residues alanine 253–aspartate 432 form the PCI domain. A disordered region spans residues arginine 462–glutamine 484. The segment covering tyrosine 468 to glutamine 484 has biased composition (basic and acidic residues).

Belongs to the proteasome subunit S3 family. As to quaternary structure, the 26S proteasome is composed of a core protease, known as the 20S proteasome, capped at one or both ends by the 19S regulatory complex (RC). The RC is composed of at least 18 different subunits in two subcomplexes, the base and the lid, which form the portions proximal and distal to the 20S proteolytic core, respectively.

In terms of biological role, acts as a regulatory subunit of the 26 proteasome which is involved in the ATP-dependent degradation of ubiquitinated proteins. The polypeptide is Probable 26S proteasome non-ATPase regulatory subunit 3 (DOXA2) (Anopheles stephensi (Indo-Pakistan malaria mosquito)).